The sequence spans 499 residues: MIRNSMKSHTELLSWSLLQKEAKRVRLNSDSQPRVVPDSNNYESRKQINCIVYDYSRQRVNRTIIDLLIDLANEVKLPEKIDNLINGKKINISENRPALHTALRDLSNKSILIDGLDIMSEVVSTREKIRMISNRIREKKWLGYSGLPITDVVNIGIGGSDLGPRVCIHALSNYVSKEFNYHFISDVDPASFNDVIVKINPETTLFIVSSKSFTTKETLLNARKAFALYEDRASIDQHFIAVTAHPERAHQIGIKTVLPIWDWVGGRFSFCSAVNLITAIAIGYEQFVELLAGAHDVDTHVQFTDFKNNIPVLMALIGIWNNNFLNIHNLLILTYSKKLEYFVPYVQQLDMESNGKSIDVNGRMVGYATGPIVWGGLGNQAQHSYFQLLCQGTHRCVGDFITLKTNDEHEINSMCHYKMKVLSEGIQTIENPYGYIPGNMPMNHLILSDCSPYTLGALVALYEHKIFVQSVIWNINPFDQPGIESAKSAHREITLSSEL.

Glu-352 serves as the catalytic Proton donor. Residues His-383 and Lys-487 contribute to the active site.

This sequence belongs to the GPI family.

The protein resides in the cytoplasm. The catalysed reaction is alpha-D-glucose 6-phosphate = beta-D-fructose 6-phosphate. It participates in carbohydrate biosynthesis; gluconeogenesis. Its pathway is carbohydrate degradation; glycolysis; D-glyceraldehyde 3-phosphate and glycerone phosphate from D-glucose: step 2/4. Catalyzes the reversible isomerization of glucose-6-phosphate to fructose-6-phosphate. The polypeptide is Glucose-6-phosphate isomerase (Legionella pneumophila (strain Lens)).